The chain runs to 1178 residues: Zinc finger CCHC domain-containing protein 2 (1178 aa).

Disordered regions lie at residues 1-90 (MLRM…GPSA), 207-249 (AARG…RVGG), 557-683 (VTSA…SVNQ), and 936-986 (LSTA…SDST). Positions 43 to 67 (PPPPPPPPAGPSRGPLPPPPPPRGL) are enriched in pro residues. Positions 75 to 88 (AAAGAGMPGGGGGP) are enriched in gly residues. The segment covering 208-219 (ARGEGSRGGAED) has biased composition (basic and acidic residues). Residues 220–229 (ERGEDGDGEQ) show a composition bias toward acidic residues. At S236 the chain carries Phosphoserine. A compositionally biased stretch (basic and acidic residues) spans 580-594 (PQTEKEKIKKTDNRL). Positions 595–607 (NSRINGIRLSTPQ) are enriched in polar residues. Positions 632 to 641 (SSESYSSPSS) are enriched in low complexity. The span at 642–661 (PRHDGRESFESEEEKDRDTD) shows a compositional bias: basic and acidic residues. A compositionally biased stretch (polar residues) spans 665-683 (EDSGNPSTTRFTGYGSVNQ). Over residues 937-948 (STAATSPQPASA) the composition is skewed to low complexity. Residues 959-973 (PAVPTHTPGPAPSPS) are compositionally biased toward pro residues. The segment covering 974–986 (PALTHSTAQSDST) has biased composition (polar residues). A CCHC-type zinc finger spans residues 1131-1148 (VSCYNCGVSGHYAQDCKQ).

The polypeptide is Zinc finger CCHC domain-containing protein 2 (Homo sapiens (Human)).